The following is a 242-amino-acid chain: UPF0309 protein BH3325 (242 aa).

Residues 34–217 (VSEAVMNGGR…HLLVQQGFEP (184 aa)) form the SIS domain.

The protein belongs to the UPF0309 family.

The chain is UPF0309 protein BH3325 from Halalkalibacterium halodurans (strain ATCC BAA-125 / DSM 18197 / FERM 7344 / JCM 9153 / C-125) (Bacillus halodurans).